An 80-amino-acid chain; its full sequence is Cell division protein ZapB (80 aa).

Positions 3 to 80 (FEVFEKLEAK…ALLGKMNEVN (78 aa)) form a coiled coil.

This sequence belongs to the ZapB family. In terms of assembly, homodimer. The ends of the coiled-coil dimer bind to each other, forming polymers. Interacts with FtsZ.

The protein localises to the cytoplasm. In terms of biological role, non-essential, abundant cell division factor that is required for proper Z-ring formation. It is recruited early to the divisome by direct interaction with FtsZ, stimulating Z-ring assembly and thereby promoting cell division earlier in the cell cycle. Its recruitment to the Z-ring requires functional FtsA or ZipA. The polypeptide is Cell division protein ZapB (Edwardsiella ictaluri (strain 93-146)).